A 275-amino-acid chain; its full sequence is WIMGHMVNAIEQVDEFLDLGANAIEFDVDFDDDGVAKYTHHGIPCDCGRLCTKYAVFTEYLDYVRQVTTPGDPKFRKELVLLALDLKLQRISSEKAYAAGVDVATKLLDHYWMRGWNGGRAYILLNIPLVEDYEFIRAFKDTLRKEGHEQYNAKVGINFTGNEDLDEIREVLEKLGEDEHIWQADGITSCFPRGTERLKKALEKRDTPGYKYISKVYAWTLVRSSIMRRSLRLGVDGVMSNYPDSVVKVLKEKEFSDKFRLATYADNPWEKFTPI.

Residue H5 is part of the active site. Residues E25 and D27 each coordinate Mg(2+). The active-site Nucleophile is the H41. 2 cysteine pairs are disulfide-bonded: C45–C51 and C47–C190. Position 85 (D85) interacts with Mg(2+).

It belongs to the arthropod phospholipase D family. Class II subfamily. The cofactor is Mg(2+). As to expression, expressed by the venom gland.

It is found in the secreted. It catalyses the reaction an N-(acyl)-sphingosylphosphocholine = an N-(acyl)-sphingosyl-1,3-cyclic phosphate + choline. It carries out the reaction an N-(acyl)-sphingosylphosphoethanolamine = an N-(acyl)-sphingosyl-1,3-cyclic phosphate + ethanolamine. The catalysed reaction is a 1-acyl-sn-glycero-3-phosphocholine = a 1-acyl-sn-glycero-2,3-cyclic phosphate + choline. The enzyme catalyses a 1-acyl-sn-glycero-3-phosphoethanolamine = a 1-acyl-sn-glycero-2,3-cyclic phosphate + ethanolamine. Its function is as follows. Dermonecrotic toxins cleave the phosphodiester linkage between the phosphate and headgroup of certain phospholipids (sphingolipid and lysolipid substrates), forming an alcohol (often choline) and a cyclic phosphate. This toxin acts on sphingomyelin (SM). It may also act on ceramide phosphoethanolamine (CPE), lysophosphatidylcholine (LPC) and lysophosphatidylethanolamine (LPE), but not on lysophosphatidylserine (LPS), and lysophosphatidylglycerol (LPG). It acts by transphosphatidylation, releasing exclusively cyclic phosphate products as second products. Induces dermonecrosis, hemolysis, increased vascular permeability, edema, inflammatory response, and platelet aggregation. The protein is Dermonecrotic toxin SpeSicTox-betaIIA2i of Sicarius peruensis (Six-eyed sand spider).